The primary structure comprises 71 residues: Large ribosomal subunit protein bL31 (71 aa).

Residues C16, C18, C37, and C40 each contribute to the Zn(2+) site.

Belongs to the bacterial ribosomal protein bL31 family. Type A subfamily. As to quaternary structure, part of the 50S ribosomal subunit. The cofactor is Zn(2+).

Binds the 23S rRNA. The sequence is that of Large ribosomal subunit protein bL31 from Pseudomonas putida (strain W619).